A 332-amino-acid chain; its full sequence is Holliday junction branch migration complex subunit RuvB (332 aa).

The interval 1-181 is large ATPase domain (RuvB-L); the sequence is MTRFLDSDAM…FGITGHMEYY (181 aa). ATP contacts are provided by residues L20, R21, G62, K65, T66, T67, 128-130, R171, Y181, and R218; that span reads EDF. Mg(2+) is bound at residue T66. Positions 182-252 are small ATPAse domain (RuvB-S); that stretch reads EENDLTEIIE…ITDKALTMLD (71 aa). The tract at residues 255-332 is head domain (RuvB-H); that stretch reads HEGLDYVDQK…EHLGYQRFDK (78 aa). The DNA site is built by R291, R310, R312, and R315.

The protein belongs to the RuvB family. In terms of assembly, homohexamer. Forms an RuvA(8)-RuvB(12)-Holliday junction (HJ) complex. HJ DNA is sandwiched between 2 RuvA tetramers; dsDNA enters through RuvA and exits via RuvB. An RuvB hexamer assembles on each DNA strand where it exits the tetramer. Each RuvB hexamer is contacted by two RuvA subunits (via domain III) on 2 adjacent RuvB subunits; this complex drives branch migration. In the full resolvosome a probable DNA-RuvA(4)-RuvB(12)-RuvC(2) complex forms which resolves the HJ.

It is found in the cytoplasm. It catalyses the reaction ATP + H2O = ADP + phosphate + H(+). In terms of biological role, the RuvA-RuvB-RuvC complex processes Holliday junction (HJ) DNA during genetic recombination and DNA repair, while the RuvA-RuvB complex plays an important role in the rescue of blocked DNA replication forks via replication fork reversal (RFR). RuvA specifically binds to HJ cruciform DNA, conferring on it an open structure. The RuvB hexamer acts as an ATP-dependent pump, pulling dsDNA into and through the RuvAB complex. RuvB forms 2 homohexamers on either side of HJ DNA bound by 1 or 2 RuvA tetramers; 4 subunits per hexamer contact DNA at a time. Coordinated motions by a converter formed by DNA-disengaged RuvB subunits stimulates ATP hydrolysis and nucleotide exchange. Immobilization of the converter enables RuvB to convert the ATP-contained energy into a lever motion, pulling 2 nucleotides of DNA out of the RuvA tetramer per ATP hydrolyzed, thus driving DNA branch migration. The RuvB motors rotate together with the DNA substrate, which together with the progressing nucleotide cycle form the mechanistic basis for DNA recombination by continuous HJ branch migration. Branch migration allows RuvC to scan DNA until it finds its consensus sequence, where it cleaves and resolves cruciform DNA. The protein is Holliday junction branch migration complex subunit RuvB of Streptococcus agalactiae serotype Ia (strain ATCC 27591 / A909 / CDC SS700).